Consider the following 550-residue polypeptide: CTP synthase (550 aa).

The tract at residues Met1–Leu265 is amidoligase domain. Ser13 lines the CTP pocket. Residue Ser13 coordinates UTP. Position 14 to 19 (Ser14 to Ile19) interacts with ATP. Tyr54 lines the L-glutamine pocket. Asp71 serves as a coordination point for ATP. Mg(2+) is bound by residues Asp71 and Glu139. Residues Asp146–Glu148, Lys186–Gln191, and Lys222 each bind CTP. UTP is bound by residues Lys186–Gln191 and Lys222. The region spanning Thr290–Arg541 is the Glutamine amidotransferase type-1 domain. Residue Gly351 coordinates L-glutamine. The active-site Nucleophile; for glutamine hydrolysis is Cys378. L-glutamine contacts are provided by residues Leu379 to Gln382, Glu402, and Arg469. Residues His514 and Glu516 contribute to the active site.

The protein belongs to the CTP synthase family. In terms of assembly, homotetramer.

The enzyme catalyses UTP + L-glutamine + ATP + H2O = CTP + L-glutamate + ADP + phosphate + 2 H(+). The catalysed reaction is L-glutamine + H2O = L-glutamate + NH4(+). It carries out the reaction UTP + NH4(+) + ATP = CTP + ADP + phosphate + 2 H(+). It functions in the pathway pyrimidine metabolism; CTP biosynthesis via de novo pathway; CTP from UDP: step 2/2. With respect to regulation, allosterically activated by GTP, when glutamine is the substrate; GTP has no effect on the reaction when ammonia is the substrate. The allosteric effector GTP functions by stabilizing the protein conformation that binds the tetrahedral intermediate(s) formed during glutamine hydrolysis. Inhibited by the product CTP, via allosteric rather than competitive inhibition. Functionally, catalyzes the ATP-dependent amination of UTP to CTP with either L-glutamine or ammonia as the source of nitrogen. Regulates intracellular CTP levels through interactions with the four ribonucleotide triphosphates. The chain is CTP synthase from Nitrosococcus oceani (strain ATCC 19707 / BCRC 17464 / JCM 30415 / NCIMB 11848 / C-107).